We begin with the raw amino-acid sequence, 167 residues long: Osteocalcin 2a (167 aa).

Residues 1 to 18 (MKSLTLLTICAVLSVSLS) form the signal peptide. Positions 19 to 118 (MNDLALDVVL…LASVLLRRKR (100 aa)) are excised as a propeptide. The interval 28-99 (LDPAPDPATE…TTEDPAAATE (72 aa)) is disordered. Positions 38–87 (PAPAADSSASSSASSSSSSASDSSASASDSSDSDSSSASSSSSSSESASA) are enriched in low complexity. The region spanning 131–163 (QVESLSEVCELNLACEHMAETAGIVAAYTAYYG) is the Gla domain. Ca(2+) contacts are provided by Glu-133, Glu-137, and Glu-140. 4-carboxyglutamate is present on residues Glu-133, Glu-137, and Glu-140. A disulfide bridge connects residues Cys-139 and Cys-145.

Belongs to the osteocalcin/matrix Gla protein family. Gamma-carboxyglutamate residues are formed by vitamin K dependent carboxylation. These residues are essential for the binding of calcium.

The protein resides in the secreted. Binds strongly to apatite and calcium. This is Osteocalcin 2a from Oncorhynchus mykiss (Rainbow trout).